Reading from the N-terminus, the 442-residue chain is UDP-glycosyltransferase 79B8 (442 aa).

UDP-alpha-D-glucose is bound by residues Ser-260, 319–321 (VQQ), 336–344 (HCGPGTIWE), and 358–361 (LGDQ).

This sequence belongs to the UDP-glycosyltransferase family.

In Arabidopsis thaliana (Mouse-ear cress), this protein is UDP-glycosyltransferase 79B8 (UGT79B8).